A 217-amino-acid chain; its full sequence is Probable transaldolase (217 aa).

The active-site Schiff-base intermediate with substrate is Lys83.

Belongs to the transaldolase family. Type 3B subfamily.

The protein localises to the cytoplasm. It catalyses the reaction D-sedoheptulose 7-phosphate + D-glyceraldehyde 3-phosphate = D-erythrose 4-phosphate + beta-D-fructose 6-phosphate. It functions in the pathway carbohydrate degradation; pentose phosphate pathway; D-glyceraldehyde 3-phosphate and beta-D-fructose 6-phosphate from D-ribose 5-phosphate and D-xylulose 5-phosphate (non-oxidative stage): step 2/3. Its function is as follows. Transaldolase is important for the balance of metabolites in the pentose-phosphate pathway. The chain is Probable transaldolase from Brucella anthropi (strain ATCC 49188 / DSM 6882 / CCUG 24695 / JCM 21032 / LMG 3331 / NBRC 15819 / NCTC 12168 / Alc 37) (Ochrobactrum anthropi).